We begin with the raw amino-acid sequence, 268 residues long: Ribosomal RNA small subunit methyltransferase A (268 aa).

The S-adenosyl-L-methionine site is built by Asn23, Ile25, Gly50, Glu72, Asp97, and Asn116.

This sequence belongs to the class I-like SAM-binding methyltransferase superfamily. rRNA adenine N(6)-methyltransferase family. RsmA subfamily.

It localises to the cytoplasm. The enzyme catalyses adenosine(1518)/adenosine(1519) in 16S rRNA + 4 S-adenosyl-L-methionine = N(6)-dimethyladenosine(1518)/N(6)-dimethyladenosine(1519) in 16S rRNA + 4 S-adenosyl-L-homocysteine + 4 H(+). Specifically dimethylates two adjacent adenosines (A1518 and A1519) in the loop of a conserved hairpin near the 3'-end of 16S rRNA in the 30S particle. May play a critical role in biogenesis of 30S subunits. This chain is Ribosomal RNA small subunit methyltransferase A, found in Rickettsia bellii (strain OSU 85-389).